A 282-amino-acid polypeptide reads, in one-letter code: NADPH-dependent 7-cyano-7-deazaguanine reductase (282 aa).

A substrate-binding site is contributed by I88 to S90. S90 to K91 contacts NADPH. C190 (thioimide intermediate) is an active-site residue. The active-site Proton donor is the D197. H229–E230 is a binding site for substrate. R258–G259 contacts NADPH.

This sequence belongs to the GTP cyclohydrolase I family. QueF type 2 subfamily. Homodimer.

The protein resides in the cytoplasm. It carries out the reaction 7-aminomethyl-7-carbaguanine + 2 NADP(+) = 7-cyano-7-deazaguanine + 2 NADPH + 3 H(+). It participates in tRNA modification; tRNA-queuosine biosynthesis. Functionally, catalyzes the NADPH-dependent reduction of 7-cyano-7-deazaguanine (preQ0) to 7-aminomethyl-7-deazaguanine (preQ1). The polypeptide is NADPH-dependent 7-cyano-7-deazaguanine reductase (Escherichia coli O45:K1 (strain S88 / ExPEC)).